The following is a 318-amino-acid chain: UPF0725 protein At3g44770 (318 aa).

The protein belongs to the UPF0725 (EMB2204) family.

The chain is UPF0725 protein At3g44770 from Arabidopsis thaliana (Mouse-ear cress).